The following is a 345-amino-acid chain: Guanine nucleotide-binding protein G(i) subunit alpha-3 (345 aa).

A G-alpha domain is found at 23–345 (KEVKLLLLGA…KSNLMECGLY (323 aa)). Residues 26–39 (KLLLLGAGESGKST) form a G1 motif region. Gly33, Glu34, Ser35, Gly36, Lys37, Ser38, Thr39, Asp141, Ser142, Leu166, Arg167, Thr168, Arg169, Val170, Lys171, Thr172, Val192, Gly194, Asn260, Lys261, Asp263, Leu264, Cys316, Ala317, and Thr318 together coordinate GTP. Residue Ser38 participates in Mg(2+) binding. Positions 164 to 172 (DVLRTRVKT) are G2 motif. Mg(2+) is bound at residue Thr172. A G3 motif region spans residues 187-196 (FKMFDVGGQR). Positions 256–263 (ILFLNKKD) are G4 motif. The tract at residues 315–320 (TCATDT) is G5 motif.

This sequence belongs to the G-alpha family. G(i/o/t/z) subfamily. In terms of assembly, heterotrimeric G proteins are composed of 3 units; alpha, beta and gamma. The alpha subunit contains the guanine nucleotide binding site. GTP binding causes dissociation of the heterotrimer, liberating the individual subunits so that they can interact with downstream effector proteins.

The protein localises to the cytoplasm. The protein resides in the cell membrane. It localises to the cytoskeleton. It is found in the microtubule organizing center. Its subcellular location is the centrosome. The protein localises to the membrane. In terms of biological role, heterotrimeric guanine nucleotide-binding proteins (G proteins) function as transducers downstream of G protein-coupled receptors (GPCRs) in numerous signaling cascades. The alpha chain contains the guanine nucleotide binding site and alternates between an active, GTP-bound state and an inactive, GDP-bound state. Signaling by an activated GPCR promotes GDP release and GTP binding. The alpha subunit has a low GTPase activity that converts bound GTP to GDP, thereby terminating the signal. Both GDP release and GTP hydrolysis are modulated by numerous regulatory proteins. Signaling is mediated via effector proteins, such as adenylate cyclase. Inhibits adenylate cyclase activity, leading to decreased intracellular cAMP levels. Stimulates the activity of receptor-regulated K(+) channels. The active GTP-bound form prevents the association of RGS14 with centrosomes and is required for the translocation of RGS14 from the cytoplasm to the plasma membrane. May play a role in cell division. The active GTP-bound form activates the calcium permeant TRPC5 ion channels. The sequence is that of Guanine nucleotide-binding protein G(i) subunit alpha-3 (gnai3) from Xenopus laevis (African clawed frog).